Here is a 464-residue protein sequence, read N- to C-terminus: Serine/threonine-protein kinase 38-like (464 aa).

Position 2 is an N-acetylalanine (A2). Positions 64-89 are S100B binding; that stretch reads KLRRSQHARKETEFLRLKRTRLGLDD. T75 is subject to Phosphothreonine. One can recognise a Protein kinase domain in the interval 90 to 383; that stretch reads FESLKVIGRG…VEEIKGHPFF (294 aa). Residues 96–104 and K119 each bind ATP; that span reads IGRGAFGEV. D213 serves as the catalytic Proton acceptor. S282 is modified (phosphoserine; by autocatalysis). The 70-residue stretch at 384–453 folds into the AGC-kinase C-terminal domain; it reads EGVDWGHIRE…KRFEGLTQRG (70 aa). The residue at position 442 (T442) is a Phosphothreonine; by STK24/MST3.

Belongs to the protein kinase superfamily. AGC Ser/Thr protein kinase family. Homodimeric S100B binds two molecules of STK38L. Interacts with MOB1 and MOB2. Interacts with MICAL1; leading to inhibit the protein kinase activity by antagonizing activation by MST1/STK4. It depends on Mg(2+) as a cofactor. As to expression, highly expressed in the large and small intestine, stomach and testis. High levels also present in the brain, in particular the neurocortex, basal forebrain, hippocampus, the amygdala, cerebellum and brainstem.

It is found in the cytoplasm. The protein resides in the cytoskeleton. The protein localises to the membrane. It catalyses the reaction L-seryl-[protein] + ATP = O-phospho-L-seryl-[protein] + ADP + H(+). The catalysed reaction is L-threonyl-[protein] + ATP = O-phospho-L-threonyl-[protein] + ADP + H(+). Activated by binding of S100B which releases autoinhibitory N-lobe interactions, enabling ATP to bind and the autophosphorylation of Ser-282. Thr-442 then undergoes calcium-dependent phosphorylation by STK24/MST3. Interactions between phosphorylated Thr-442 and the N-lobe promote additional structural changes that complete the activation of the kinase. Autoinhibition is also released by the binding of MOB1/MOBKL1A and MOB2 to the N-terminal of STK38L. Functionally, involved in the regulation of structural processes in differentiating and mature neuronal cells. The chain is Serine/threonine-protein kinase 38-like from Mus musculus (Mouse).